We begin with the raw amino-acid sequence, 319 residues long: MKRVASRRLLAAVVLTACSSFLPLSAVHAETPEKPRIALVMKSLANEFFLTMEDGAKAYQKEHADRFELVSNGIKDETDTSSQIRIVEQMIVSGVDALVIAPADSKALVPVVKKALDAGIVVVNIDNRFDPQVLQAKKIGVPFVGPDNRKGARLVGEYLAKRLKVGDEVGIIEGVSTTTNAQQRTAGFKDAMDAAGMKIVSLQSGNWEIEKGNAVASAMLNEHPDLKALLAGNDSMALGAVSAVRAAGRAGQVKVVGYDNIQAIKPMLKDGRVLATADQFAAKQAVFGIQTALKLLAGQTPEHEKDGVVETPVELVTAP.

The N-terminal stretch at M1–A29 is a signal peptide.

It belongs to the bacterial solute-binding protein 2 family.

The protein resides in the periplasm. Its function is as follows. Binds specifically both D-ribose and D-allose, with affinities in the lower micromolar range. This Pseudomonas aeruginosa (strain ATCC 15692 / DSM 22644 / CIP 104116 / JCM 14847 / LMG 12228 / 1C / PRS 101 / PAO1) protein is D-ribose/D-allose-binding protein.